The chain runs to 276 residues: Dermonecrotic toxin LlSicTox-alphaIV2ii (276 aa).

Residue H5 is part of the active site. Mg(2+)-binding residues include E25 and D27. The active-site Nucleophile is the H41. 2 cysteine pairs are disulfide-bonded: C45–C51 and C47–C193. Residue D85 coordinates Mg(2+).

Belongs to the arthropod phospholipase D family. Class II subfamily. It depends on Mg(2+) as a cofactor. Expressed by the venom gland.

Its subcellular location is the secreted. It catalyses the reaction an N-(acyl)-sphingosylphosphocholine = an N-(acyl)-sphingosyl-1,3-cyclic phosphate + choline. It carries out the reaction an N-(acyl)-sphingosylphosphoethanolamine = an N-(acyl)-sphingosyl-1,3-cyclic phosphate + ethanolamine. The catalysed reaction is a 1-acyl-sn-glycero-3-phosphocholine = a 1-acyl-sn-glycero-2,3-cyclic phosphate + choline. The enzyme catalyses a 1-acyl-sn-glycero-3-phosphoethanolamine = a 1-acyl-sn-glycero-2,3-cyclic phosphate + ethanolamine. Dermonecrotic toxins cleave the phosphodiester linkage between the phosphate and headgroup of certain phospholipids (sphingolipid and lysolipid substrates), forming an alcohol (often choline) and a cyclic phosphate. This toxin acts on sphingomyelin (SM). It may also act on ceramide phosphoethanolamine (CPE), lysophosphatidylcholine (LPC) and lysophosphatidylethanolamine (LPE), but not on lysophosphatidylserine (LPS), and lysophosphatidylglycerol (LPG). It acts by transphosphatidylation, releasing exclusively cyclic phosphate products as second products. Induces dermonecrosis, hemolysis, increased vascular permeability, edema, inflammatory response, and platelet aggregation. The sequence is that of Dermonecrotic toxin LlSicTox-alphaIV2ii from Loxosceles laeta (South American recluse spider).